A 104-amino-acid polypeptide reads, in one-letter code: Circadian clock oscillator protein KaiB (104 aa).

Belongs to the KaiB family. In terms of assembly, the KaiABC complex composition changes during the circadian cycle to control KaiC phosphorylation. Complexes KaiC(6), KaiA(2-4):KaiC(6), KaiB(6):KaiC(6) and KaiC(6):KaiB(6):KaiA(12) are among the most important forms, many form cooperatively. Undergoes a major conformational rearrangment; in the free state forms homotetramers as a dimer of dimers. When bound to the CI domain of KaiC switches to a monomeric thioredoxin-fold (KaiB(fs)). KaiB(fs) binds CikA, leading it to dephosphorylate phospho-RpaA.

Functionally, key component of the KaiABC oscillator complex, which constitutes the main circadian regulator in cyanobacteria. Complex composition changes during the circadian cycle to control KaiC phosphorylation. KaiA stimulates KaiC autophosphorylation, while KaiB sequesters KaiA, leading to KaiC autodephosphorylation. Phospho-Ser-431 KaiC accumulation triggers binding of KaiB to form the KaiB(6):KaiC(6) complex, leading to changes in output regulators CikA and SasA. KaiB switches to a thioredoxin-like fold (KaiB(fs)) when bound to KaiC. KaiB(6):KaiC(6) formation exposes a site for KaiA binding that sequesters KaiA from KaiC, making the KaiC(6):KaiB(6):KaiA(12) complex that results in KaiC autodephosphorylation. Its function is as follows. A metamorphic protein which reversibly switches between an inactive tetrameric fold and a rare, thioredoxin-like monomeric fold (KaiB(fs)). KaiB(fs) binds phospho-KaiC, KaiA and CikA. KaiA and CikA compete for binding to KaiB(fs), and KaiB(fs) and SasA compete for binding to KaiC, thus the clock oscillator and output signal pathway are tightly coupled. The protein is Circadian clock oscillator protein KaiB of Rippkaea orientalis (strain PCC 8801 / RF-1) (Cyanothece sp. (strain PCC 8801)).